Reading from the N-terminus, the 383-residue chain is Lipid-A-disaccharide synthase (383 aa).

This sequence belongs to the LpxB family.

It catalyses the reaction a lipid X + a UDP-2-N,3-O-bis[(3R)-3-hydroxyacyl]-alpha-D-glucosamine = a lipid A disaccharide + UDP + H(+). The protein operates within bacterial outer membrane biogenesis; LPS lipid A biosynthesis. Condensation of UDP-2,3-diacylglucosamine and 2,3-diacylglucosamine-1-phosphate to form lipid A disaccharide, a precursor of lipid A, a phosphorylated glycolipid that anchors the lipopolysaccharide to the outer membrane of the cell. The polypeptide is Lipid-A-disaccharide synthase (Aliivibrio fischeri (strain ATCC 700601 / ES114) (Vibrio fischeri)).